Consider the following 469-residue polypeptide: GTPase Der (469 aa).

2 EngA-type G domains span residues 3-166 and 177-350; these read PVIA…PEDE and LRLA…ESAN. GTP is bound by residues 9–16, 56–60, 118–121, 183–190, 230–234, and 295–298; these read GRPNVGKS, DTGGI, NKVD, DTAGV, and NKWD. Residues 351-435 enclose the KH-like domain; the sequence is LKVSPAKLTQ…PVKIEFKTSE (85 aa).

The protein belongs to the TRAFAC class TrmE-Era-EngA-EngB-Septin-like GTPase superfamily. EngA (Der) GTPase family. In terms of assembly, associates with the 50S ribosomal subunit.

Functionally, GTPase that plays an essential role in the late steps of ribosome biogenesis. The chain is GTPase Der from Acinetobacter baumannii (strain AB0057).